A 444-amino-acid chain; its full sequence is Proline--tRNA ligase (444 aa).

The protein belongs to the class-II aminoacyl-tRNA synthetase family. ProS type 2 subfamily. As to quaternary structure, homodimer.

The protein localises to the cytoplasm. It carries out the reaction tRNA(Pro) + L-proline + ATP = L-prolyl-tRNA(Pro) + AMP + diphosphate. Functionally, catalyzes the attachment of proline to tRNA(Pro) in a two-step reaction: proline is first activated by ATP to form Pro-AMP and then transferred to the acceptor end of tRNA(Pro). In Methylobacterium sp. (strain 4-46), this protein is Proline--tRNA ligase.